The sequence spans 123 residues: Large ribosomal subunit protein uL14c (123 aa).

Belongs to the universal ribosomal protein uL14 family. In terms of assembly, part of the 50S ribosomal subunit.

It is found in the plastid. Its subcellular location is the chloroplast. Functionally, binds to 23S rRNA. The polypeptide is Large ribosomal subunit protein uL14c (Oryza nivara (Indian wild rice)).